Reading from the N-terminus, the 573-residue chain is 2-succinyl-5-enolpyruvyl-6-hydroxy-3-cyclohexene-1-carboxylate synthase (573 aa).

Belongs to the TPP enzyme family. MenD subfamily. In terms of assembly, homodimer. Requires Mg(2+) as cofactor. The cofactor is Mn(2+). Thiamine diphosphate is required as a cofactor.

It catalyses the reaction isochorismate + 2-oxoglutarate + H(+) = 5-enolpyruvoyl-6-hydroxy-2-succinyl-cyclohex-3-ene-1-carboxylate + CO2. It participates in quinol/quinone metabolism; 1,4-dihydroxy-2-naphthoate biosynthesis; 1,4-dihydroxy-2-naphthoate from chorismate: step 2/7. The protein operates within quinol/quinone metabolism; menaquinone biosynthesis. Catalyzes the thiamine diphosphate-dependent decarboxylation of 2-oxoglutarate and the subsequent addition of the resulting succinic semialdehyde-thiamine pyrophosphate anion to isochorismate to yield 2-succinyl-5-enolpyruvyl-6-hydroxy-3-cyclohexene-1-carboxylate (SEPHCHC). This Shewanella baltica (strain OS195) protein is 2-succinyl-5-enolpyruvyl-6-hydroxy-3-cyclohexene-1-carboxylate synthase.